A 173-amino-acid polypeptide reads, in one-letter code: HTH-type transcriptional regulator IscR (173 aa).

In terms of domain architecture, HTH rrf2-type spans 2–131 (RLTSKGRYAV…NNITLGELMM (130 aa)). A DNA-binding region (H-T-H motif) is located at residues 28 to 51 (LADISERQGISLSYLEQLFSKLRK). 3 residues coordinate [2Fe-2S] cluster: Cys-92, Cys-98, and Cys-104.

[2Fe-2S] cluster is required as a cofactor.

Its function is as follows. Regulates the transcription of several operons and genes involved in the biogenesis of Fe-S clusters and Fe-S-containing proteins. The sequence is that of HTH-type transcriptional regulator IscR from Vibrio cholerae serotype O1 (strain ATCC 39315 / El Tor Inaba N16961).